The following is a 77-amino-acid chain: NAD(P)H-quinone oxidoreductase subunit L (77 aa).

Transmembrane regions (helical) follow at residues 12–32 (LIAYIGIIFTYLLVIPLLLFY) and 47–67 (LGIYGLVFLFFPGLILFSPFL).

Belongs to the complex I NdhL subunit family. NDH-1 can be composed of about 15 different subunits; different subcomplexes with different compositions have been identified which probably have different functions.

The protein localises to the cellular thylakoid membrane. The catalysed reaction is a plastoquinone + NADH + (n+1) H(+)(in) = a plastoquinol + NAD(+) + n H(+)(out). The enzyme catalyses a plastoquinone + NADPH + (n+1) H(+)(in) = a plastoquinol + NADP(+) + n H(+)(out). NDH-1 shuttles electrons from an unknown electron donor, via FMN and iron-sulfur (Fe-S) centers, to quinones in the respiratory and/or the photosynthetic chain. The immediate electron acceptor for the enzyme in this species is believed to be plastoquinone. Couples the redox reaction to proton translocation, and thus conserves the redox energy in a proton gradient. Cyanobacterial NDH-1 also plays a role in inorganic carbon-concentration. This Prochlorococcus marinus (strain AS9601) protein is NAD(P)H-quinone oxidoreductase subunit L.